Reading from the N-terminus, the 516-residue chain is GMP synthase [glutamine-hydrolyzing] (516 aa).

A Glutamine amidotransferase type-1 domain is found at 8 to 198 (KILILDFGSQ…VVNICGCDTL (191 aa)). The active-site Nucleophile is the Cys84. Active-site residues include His172 and Glu174. One can recognise a GMPS ATP-PPase domain in the interval 199–391 (WNIENIIEND…LGLPYNMLYR (193 aa)). 226–232 (SGGVDSS) contributes to the ATP binding site.

In terms of assembly, homodimer.

It carries out the reaction XMP + L-glutamine + ATP + H2O = GMP + L-glutamate + AMP + diphosphate + 2 H(+). It functions in the pathway purine metabolism; GMP biosynthesis; GMP from XMP (L-Gln route): step 1/1. Its function is as follows. Catalyzes the synthesis of GMP from XMP. This Francisella tularensis subsp. tularensis (strain FSC 198) protein is GMP synthase [glutamine-hydrolyzing].